Consider the following 274-residue polypeptide: 16S rRNA (guanine(1405)-N(7))-methyltransferase (274 aa).

Residues phenylalanine 64, 102-104, arginine 108, alanine 133, aspartate 156, 182-183, leucine 198, and glutamine 207 each bind S-adenosyl-L-methionine; these read HMS and DL.

Belongs to the methyltransferase superfamily. Aminoglycoside resistance family.

It carries out the reaction guanosine(1405) in 16S rRNA + S-adenosyl-L-methionine = N(7)-methylguanosine(1405) in 16S rRNA + S-adenosyl-L-homocysteine. Specifically methylates the N(7) position of guanine 1405 in 16S rRNA. Confers resistance to aminoglycosides. This Micromonospora rosea protein is 16S rRNA (guanine(1405)-N(7))-methyltransferase (grm).